Here is a 260-residue protein sequence, read N- to C-terminus: Thiamine thiazole synthase (260 aa).

NAD(+)-binding positions include serine 41, glutamate 60–arginine 61, glycine 68, valine 131, and histidine 159–aspartate 161. Aspartate 161 and histidine 176 together coordinate Fe cation. Methionine 225 is an NAD(+) binding site. Arginine 235 contacts glycine.

It belongs to the THI4 family. In terms of assembly, homooctamer; tetramer of dimers. Fe(2+) serves as cofactor.

The catalysed reaction is hydrogen sulfide + glycine + NAD(+) = ADP-5-ethyl-4-methylthiazole-2-carboxylate + nicotinamide + 3 H2O + H(+). It functions in the pathway cofactor biosynthesis; thiamine diphosphate biosynthesis. Involved in the biosynthesis of the thiazole moiety of thiamine. Catalyzes the conversion of NAD and glycine to adenosine diphosphate 5-(2-hydroxyethyl)-4-methylthiazole-2-carboxylate (ADT), an adenylated thiazole intermediate, using free sulfide as a source of sulfur. In Archaeoglobus fulgidus (strain ATCC 49558 / DSM 4304 / JCM 9628 / NBRC 100126 / VC-16), this protein is Thiamine thiazole synthase.